The following is a 196-amino-acid chain: Ras-related protein RabC (196 aa).

Residue 13–20 coordinates GTP; that stretch reads GESGVGKS. The Effector region motif lies at 35 to 43; that stretch reads FAPTLGVDF. GTP is bound by residues 63-67 and 121-124; these read DTAGQ and NKSD. 2 S-geranylgeranyl cysteine lipidation sites follow: C195 and C196.

This sequence belongs to the small GTPase superfamily. Rab family.

Its subcellular location is the cell membrane. This chain is Ras-related protein RabC (rabC), found in Dictyostelium discoideum (Social amoeba).